Here is a 65-residue protein sequence, read N- to C-terminus: MGMRMMFTMFLLVVLATTVVSFASDRASDGRNAAAKDKASDLVALTVKGCCSHPACSVNNPDICG.

The N-terminal stretch at 1-21 is a signal peptide; that stretch reads MGMRMMFTMFLLVVLATTVVS. Positions 22–48 are excised as a propeptide; it reads FASDRASDGRNAAAKDKASDLVALTVK. 2 disulfides stabilise this stretch: Cys50–Cys56 and Cys51–Cys64. The tract at residues 52-54 is ser-Xaa-Pro motif, crucial for potent interaction with nAChR; the sequence is SHP. The residue at position 64 (Cys64) is a Cysteine amide.

The protein belongs to the conotoxin A superfamily. As to expression, expressed by the venom duct.

It is found in the secreted. Alpha-conotoxins act on postsynaptic membranes, they bind to the nicotinic acetylcholine receptors (nAChR) and thus inhibit them. This toxin inhibits acetylcholine-evoked currents reversibly in oocytes expressing the human alpha-7/CHRNA7 nAChR, and blocks nerve-evoked skeletal muscle contractions in isolated mouse neuromuscular preparations, but with a very low affinity. In Conus bandanus (Banded marble cone), this protein is Alpha-conotoxin BnIA.